Here is a 573-residue protein sequence, read N- to C-terminus: Putative inorganic phosphate transporter C1683.01 (573 aa).

A run of 6 helical transmembrane segments spans residues 48-68 (MMLAGVGFFLDSYDLFIINLV), 100-120 (AASNIGNIFGQLMFGFMGDFF), 124-144 (FVYGKEMIIVIIATILLIAMP), 154-174 (MMWVFCWRWLLGVGIGGDYPM), 194-214 (LIFAFQGFGTLAGAIVTIILL), and 230-250 (LEGVWRLQFGLALVPAIGVLI). The segment covering 261 to 270 (FKNSQQLNSG) has biased composition (polar residues). 2 disordered regions span residues 261 to 280 (FKNSQQLNSGDNRDPKTSLN) and 290 to 312 (PSVTKGHPEIHESSENYLSRSNT). Transmembrane regions (helical) follow at residues 348-368 (HLLGTSVCWFLLDIAFYGVNL), 397-417 (LIIAVAGYVPGYWFNVFLVEI), 422-442 (WIQLQGFVITGLMFAILAGRW), 451-471 (FACFVIAQLFSNFGPNSTTFI), 487-507 (GISAALGKCGAILASLLFNFL), and 510-530 (IIGYGNVMWIFCGCMWGGILF).

Belongs to the major facilitator superfamily. Sugar transporter (TC 2.A.1.1) family.

The protein localises to the endoplasmic reticulum membrane. High-affinity transporter for external inorganic phosphate. The sequence is that of Putative inorganic phosphate transporter C1683.01 from Schizosaccharomyces pombe (strain 972 / ATCC 24843) (Fission yeast).